The chain runs to 361 residues: DNA replication and repair protein RecF (361 aa).

Residue 30–37 coordinates ATP; it reads GQNAQGKT.

The protein belongs to the RecF family.

The protein resides in the cytoplasm. The RecF protein is involved in DNA metabolism; it is required for DNA replication and normal SOS inducibility. RecF binds preferentially to single-stranded, linear DNA. It also seems to bind ATP. The sequence is that of DNA replication and repair protein RecF from Streptococcus gordonii (strain Challis / ATCC 35105 / BCRC 15272 / CH1 / DL1 / V288).